A 261-amino-acid polypeptide reads, in one-letter code: MLLLLSPAKSLDYDTPLPPKLPHTLPVFSEQPLELIEVLRRQSPQQLSELMGISDKLAALNVARYEAFSPRFTATNARQALLAFNGDVYEGLQARSLDAEDLDWAQQHLAILSGLYGVLRPLDRMQPYRLEMGTRLETAHGSNLYQFWGSRIAEHLNQRAARQPAGERVIVNLASQEYFKSVDLKHLKPPVVECAFEDYKNGAYKIISFHAKRARGLMARFAIQRRARSAAELEAFDLEGYALAPASSTPARLVFRRKTAD.

This sequence belongs to the UPF0246 family.

The sequence is that of UPF0246 protein Daci_5283 from Delftia acidovorans (strain DSM 14801 / SPH-1).